The chain runs to 426 residues: Inositol hexakisphosphate kinase 2 (426 aa).

Residues glutamate 207 to leucine 209 and aspartate 220 contribute to the ATP site. Residues lysine 222 and lysine 236–lysine 243 contribute to the substrate site. Aspartate 383 contacts ATP. Histidine 386 lines the substrate pocket.

The protein belongs to the inositol phosphokinase (IPK) family.

It localises to the nucleus. It catalyses the reaction 1D-myo-inositol hexakisphosphate + ATP = 5-diphospho-1D-myo-inositol 1,2,3,4,6-pentakisphosphate + ADP. Its pathway is phospholipid metabolism; phosphatidylinositol metabolism. Its activity is regulated as follows. Inhibited by flavonoids, including myricetin, quercetin, luteolin, isorhamnetin, rhamnetin, kaempferol, diosmetin and apigenin. Functionally, converts inositol hexakisphosphate (InsP6) to diphosphoinositol pentakisphosphate (InsP7/PP-InsP5). The protein is Inositol hexakisphosphate kinase 2 of Homo sapiens (Human).